We begin with the raw amino-acid sequence, 367 residues long: Protein-glutamate methylesterase/protein-glutamine glutaminase 2 (367 aa).

Residues 15-132 (RALIVDDSAL…SQSMHEMAEE (118 aa)) enclose the Response regulatory domain. 4-aspartylphosphate is present on Asp-66. The CheB-type methylesterase domain maps to 172–367 (KTSVRNVLAI…MADEIVKIVR (196 aa)). Residues Ser-184, His-211, and Asp-311 contribute to the active site.

This sequence belongs to the CheB family. Post-translationally, phosphorylated by CheA. Phosphorylation of the N-terminal regulatory domain activates the methylesterase activity.

It is found in the cytoplasm. It catalyses the reaction [protein]-L-glutamate 5-O-methyl ester + H2O = L-glutamyl-[protein] + methanol + H(+). The enzyme catalyses L-glutaminyl-[protein] + H2O = L-glutamyl-[protein] + NH4(+). Involved in chemotaxis. Part of a chemotaxis signal transduction system that modulates chemotaxis in response to various stimuli. Catalyzes the demethylation of specific methylglutamate residues introduced into the chemoreceptors (methyl-accepting chemotaxis proteins or MCP) by CheR. Also mediates the irreversible deamidation of specific glutamine residues to glutamic acid. This chain is Protein-glutamate methylesterase/protein-glutamine glutaminase 2, found in Methanosarcina mazei (strain ATCC BAA-159 / DSM 3647 / Goe1 / Go1 / JCM 11833 / OCM 88) (Methanosarcina frisia).